A 469-amino-acid polypeptide reads, in one-letter code: UDP-N-acetylmuramate--L-alanine ligase (469 aa).

122-128 lines the ATP pocket; it reads GTHGKTT.

The protein belongs to the MurCDEF family.

It localises to the cytoplasm. The catalysed reaction is UDP-N-acetyl-alpha-D-muramate + L-alanine + ATP = UDP-N-acetyl-alpha-D-muramoyl-L-alanine + ADP + phosphate + H(+). The protein operates within cell wall biogenesis; peptidoglycan biosynthesis. Functionally, cell wall formation. This chain is UDP-N-acetylmuramate--L-alanine ligase, found in Legionella pneumophila subsp. pneumophila (strain Philadelphia 1 / ATCC 33152 / DSM 7513).